The primary structure comprises 326 residues: Nucleotide sugar transporter SLC35D2 (326 aa).

The Extracellular portion of the chain corresponds to 1-15 (MEEPNAAPLPSRLAR). A helical membrane pass occupies residues 16 to 36 (LLSALFYGTCSFLIVLVNKAL). The Cytoplasmic segment spans residues 37-41 (LTTYG). A helical transmembrane segment spans residues 42–62 (FPSPIVLGIGQMATTIMILYV). Residues 63–130 (FKLNKIIHFP…LLEAIILGTQ (68 aa)) are Extracellular-facing. Residues 131–151 (YSLNIILSVLAIVLGAFIAAG) form a helical membrane-spanning segment. Residues 152–155 (SDLT) are Cytoplasmic-facing. A helical membrane pass occupies residues 156–176 (FNLEGYVFVFLNDIFTAANGV). Topologically, residues 177–189 (YTKQKMDPKELGK) are extracellular. The chain crosses the membrane as a helical span at residues 190–210 (YGVLFYNACFMLIPTVIISVS). Residues 211-225 (TGDFQQATEFRHWKN) are Cytoplasmic-facing. The chain crosses the membrane as a helical span at residues 226-246 (VLFIIQFLLSCLLGFLLMYST). The Extracellular segment spans residues 247–253 (ALCSYYN). The helical transmembrane segment at 254-276 (SALTTAVVGAIKNVSVAYIGMLV) threads the bilayer. The Cytoplasmic portion of the chain corresponds to 277–280 (GGDY). The helical transmembrane segment at 281 to 303 (IFSLLNFIGLNICMAGGLRYSFL) threads the bilayer. At 304 to 326 (TLSSQLKPKQPVDEESIPLDLKS) the chain is on the extracellular side.

It belongs to the TPT transporter family. SLC35D subfamily.

Its subcellular location is the golgi apparatus membrane. The catalysed reaction is UMP(out) + UDP-N-acetyl-alpha-D-glucosamine(in) = UMP(in) + UDP-N-acetyl-alpha-D-glucosamine(out). The enzyme catalyses UMP(out) + UDP-alpha-D-glucose(in) = UMP(in) + UDP-alpha-D-glucose(out). Nucleotide sugar antiporter transporting UDP-N-acetylglucosamine (UDP-GlcNAc) and UDP-glucose (UDP-Glc) from the cytosol into the lumen of the Golgi in exchange of UMP. By supplying UDP-N-acetylglucosamine, a donor substrate to heparan sulfate synthases, probably takes part in the synthesis of these glycoconjugates. The protein is Nucleotide sugar transporter SLC35D2 of Mus musculus (Mouse).